Here is a 238-residue protein sequence, read N- to C-terminus: Probable transcriptional regulatory protein YeeN (238 aa).

The protein belongs to the TACO1 family. YeeN subfamily.

The protein localises to the cytoplasm. The polypeptide is Probable transcriptional regulatory protein YeeN (Shigella sonnei (strain Ss046)).